We begin with the raw amino-acid sequence, 183 residues long: Gene BABR protein 2 (183 aa).

In Babesia bovis, this protein is Gene BABR protein 2.